The chain runs to 494 residues: Anthranilate synthase component 1 (494 aa).

L-tryptophan-binding positions include serine 50 and 276 to 278 (PYM). 311-312 (GT) lines the chorismate pocket. Glutamate 338 serves as a coordination point for Mg(2+). Residues tyrosine 426, arginine 446, 460-462 (GAG), and glycine 462 contribute to the chorismate site. Glutamate 475 serves as a coordination point for Mg(2+).

Belongs to the anthranilate synthase component I family. In terms of assembly, heterotetramer consisting of two non-identical subunits: a beta subunit (TrpG) and a large alpha subunit (TrpE). The cofactor is Mg(2+).

It catalyses the reaction chorismate + L-glutamine = anthranilate + pyruvate + L-glutamate + H(+). It functions in the pathway amino-acid biosynthesis; L-tryptophan biosynthesis; L-tryptophan from chorismate: step 1/5. Feedback inhibited by tryptophan. Part of a heterotetrameric complex that catalyzes the two-step biosynthesis of anthranilate, an intermediate in the biosynthesis of L-tryptophan. In the first step, the glutamine-binding beta subunit (TrpG) of anthranilate synthase (AS) provides the glutamine amidotransferase activity which generates ammonia as a substrate that, along with chorismate, is used in the second step, catalyzed by the large alpha subunit of AS (TrpE) to produce anthranilate. In the absence of TrpG, TrpE can synthesize anthranilate directly from chorismate and high concentrations of ammonia. This Acetivibrio thermocellus (Hungateiclostridium thermocellum) protein is Anthranilate synthase component 1 (trpE).